The primary structure comprises 414 residues: Esterase FrsA (414 aa).

This sequence belongs to the FrsA family.

The catalysed reaction is a carboxylic ester + H2O = an alcohol + a carboxylate + H(+). Functionally, catalyzes the hydrolysis of esters. This is Esterase FrsA from Salmonella typhi.